The following is a 471-amino-acid chain: MSICEQYYPEEPTKPTVKTESIPGPESQKQLKELGEVFDTRPAYFLADYEKSLGNYITDVDGNTYLDLYAQISSIALGYNNPALIKAAQSPEMIRALVDRPALGNFPSKDLDKILKQILKSAPKGQDHVWSGLSGADANELAFKAAFIYYRAKQRGYDADFSEKENLSVMDNDAPGAPHLAVLSFKRAFHGRLFASGSTTCSKPIHKLDFPAFHWPHAEYPSYQYPLDENSDANRKEDDHCLAIVEELIKTWSIPVAALIIEPIQSEGGDNHASKYFLQKLRDITLKYNVVYIIDEVQTGVGATGKLWCHEYADIQPPVDLVTFSKKFQSAGYFFHDPKFIPNKPYRQFNTWCGEPARMIIAGAIGQEISDKKLTEQCSRVGDYLFKKLEGLQKKYPENFQNLRGKGRGTFIAWDLPTGEKRDLLLKKLKLNGCNVGGCAVHAVRLRPSLTFEEKHADIFIEALAKSVNEL.

135–136 contacts pyridoxal 5'-phosphate; sequence GA. Arginine 192 lines the substrate pocket. Lysine 326 carries the N6-(pyridoxal phosphate)lysine modification. Threonine 351 contacts pyridoxal 5'-phosphate.

Belongs to the class-III pyridoxal-phosphate-dependent aminotransferase family. Homodimer and homotetramer. The cofactor is pyridoxal 5'-phosphate.

The protein resides in the cytoplasm. The enzyme catalyses 4-aminobutanoate + 2-oxoglutarate = succinate semialdehyde + L-glutamate. In terms of biological role, required for the degradation of gamma-aminobutyric acid (GABA), which is important for utilization of GABA as nitrogen source and for oxidative stress tolerance. Deaminates GABA to succinate semialdehyde, which in turn is converted to succinate by the succinate-semialdehyde dehydrogenase UGA2. Cannot transaminate beta-alanine (BAL). This chain is 4-aminobutyrate aminotransferase (UGA1), found in Saccharomyces cerevisiae (strain ATCC 204508 / S288c) (Baker's yeast).